A 441-amino-acid polypeptide reads, in one-letter code: Zinc finger protein ZIC 3 (441 aa).

A C2H2-type 1; atypical zinc finger spans residues 222-257; that stretch reads LSCKWLEESPMNRPQKTCDRTFSSMHELVTHMTMEH. The C2H2-type 2; atypical zinc finger occupies 266–293; sequence HICYWEECPRGGKSFKAKYKLVNHIRVH. 3 C2H2-type zinc fingers span residues 299–323, 329–353, and 359–381; these read FPCP…KRTH, FKCE…MHVH, and YICK…MKVH. The interval 375 to 441 is disordered; it reads RKHMKVHESQ…LPPNFNEWYV (67 aa). A compositionally biased stretch (low complexity) spans 383 to 399; the sequence is SQGSDSSPAASSGYESA. The span at 406 to 429 shows a compositional bias: polar residues; it reads SANSEEPSKNSSATHQTNNSSHNT.

Belongs to the GLI C2H2-type zinc-finger protein family.

It is found in the nucleus. It localises to the cytoplasm. Probably acts as a transcriptional activator. May bind to the minimal GLI-consensus sequence 5'-GGGTGGTC-3'. Can determine the ectodermal cell fate and promote the earliest step of neural and neural crest development. Involved in establishing left-right asymmetry in the embryo. In Xenopus tropicalis (Western clawed frog), this protein is Zinc finger protein ZIC 3 (zic3).